A 142-amino-acid chain; its full sequence is Large ribosomal subunit protein uL13 (142 aa).

Belongs to the universal ribosomal protein uL13 family. As to quaternary structure, part of the 50S ribosomal subunit.

This protein is one of the early assembly proteins of the 50S ribosomal subunit, although it is not seen to bind rRNA by itself. It is important during the early stages of 50S assembly. The chain is Large ribosomal subunit protein uL13 from Acidovorax sp. (strain JS42).